Reading from the N-terminus, the 558-residue chain is Aspartate--tRNA ligase 2, cytoplasmic (558 aa).

Low complexity predominate over residues 1-18; it reads MSSESEIPPLSSSTAAAE. The interval 1–57 is disordered; the sequence is MSSESEIPPLSSSTAAAEESGEKTSKKAAKKEAAKLEKLRRRQEQEEATRRTASISL. S2 bears the N-acetylserine mark. The span at 20 to 50 shows a compositional bias: basic and acidic residues; that stretch reads SGEKTSKKAAKKEAAKLEKLRRRQEQEEATR. The segment at residues 110–195 is a DNA-binding region (OB); the sequence is VLIRGRVHTN…QVEIQVRKVY (86 aa). E286 is an L-aspartate binding site. An aspartate region spans residues 308 to 311; that stretch reads QLHK. R330 serves as a coordination point for L-aspartate. Residues 330–332, 338–340, and E481 contribute to the ATP site; these read RAE and RHL. Residues E481 and S484 each contribute to the Mg(2+) site. L-aspartate is bound by residues S484 and R488. 529–532 serves as a coordination point for ATP; it reads GLER.

This sequence belongs to the class-II aminoacyl-tRNA synthetase family. Type 2 subfamily.

It localises to the cytoplasm. The protein resides in the cytosol. It is found in the endoplasmic reticulum. The catalysed reaction is tRNA(Asp) + L-aspartate + ATP = L-aspartyl-tRNA(Asp) + AMP + diphosphate. In terms of biological role, catalyzes the specific attachment of an amino acid to its cognate tRNA in a 2 step reaction: the amino acid (AA) is first activated by ATP to form AA-AMP and then transferred to the acceptor end of the tRNA. Involved in the perception of beta-aminobutyric acid (BABA) and required for BABA priming effect in disease resistance. This chain is Aspartate--tRNA ligase 2, cytoplasmic, found in Arabidopsis thaliana (Mouse-ear cress).